The following is an 83-amino-acid chain: Protein ORF5 (83 aa).

The protein belongs to the microviridae C protein family.

Functionally, plays a central role in the packaging of viral DNA into phage procapsid, which occurs in the late stage of infection. Can interact with the replicative complex after the completion of one round of DNA synthesis. When protein ORF5 is bound to the replicative form, the complex becomes accessible to procapsid and serves as a DNA packaging apparatus. In Spiroplasma melliferum (SpV4), this protein is Protein ORF5.